The primary structure comprises 470 residues: Cannabinoid receptor 1 (470 aa).

At 1–121 the chain is on the extracellular side; sequence MKSILDGLAD…TPSQQLVIAA (121 aa). Residues 2–23 form a required for mitochondrial localization region; the sequence is KSILDGLADTTFRTITTDLLYL. 2 N-linked (GlcNAc...) asparagine glycosylation sites follow: asparagine 78 and asparagine 84. The chain crosses the membrane as a helical span at residues 122-142; the sequence is LSIILGTFTVLENMLVLVVIV. The Cytoplasmic portion of the chain corresponds to 143–154; it reads QSRSLRCRPSYH. A helical transmembrane segment spans residues 155–175; that stretch reads FIGSLAVADLLGSVIFVYSFV. Over 176-187 the chain is Extracellular; the sequence is DFHVFHRKDSPN. A helical transmembrane segment spans residues 188 to 208; sequence VFLFKLGGVTASFTASVGSLF. Residues 209–232 are Cytoplasmic-facing; it reads LTAIDRYISIHRPMSYKRIVTRTK. Residues 233–253 traverse the membrane as a helical segment; the sequence is AVIAFCMMWTIAIVIAVLPLF. The Extracellular segment spans residues 254–277; the sequence is GWNCIKLRSVCSDIFPLIDETYLM. Residues 278 to 298 form a helical membrane-spanning segment; that stretch reads FWIGVTSVLLLFIVYAYMYIL. Residues 299-344 are Cytoplasmic-facing; that stretch reads WKAHNHAVRMLQRGTQKSIIVHTSEDGKVHITRPDQTRMDIRLAKT. The helical transmembrane segment at 345-365 threads the bilayer; that stretch reads LVLILVVLIICWGPLMAIMVY. Topologically, residues 366–377 are extracellular; the sequence is DVFGKINKTIKT. Asparagine 372 is a glycosylation site (N-linked (GlcNAc...) asparagine). The chain crosses the membrane as a helical span at residues 378–398; that stretch reads VFAFCSVLCLLNSTVNPIIYA. The Cytoplasmic portion of the chain corresponds to 399-470; that stretch reads LRSKDLRNAF…VSTDTSAEAV (72 aa). The S-palmitoyl cysteine moiety is linked to residue cysteine 415.

Belongs to the G-protein coupled receptor 1 family. Post-translationally, palmitoylation at Cys-415 is important for recruitment at both plasma membrane and lipid rafts and association with G protein alpha subunits. In terms of tissue distribution, expressed in neurons, especially in the olfactory bulbs, telencephalic pallium, and hypothalamus and also in the midbrain and hindbrain (in the mesencephalic tegmentum and dorsolateral rhombencephalon). Expressed also in the spinal cord.

The protein resides in the cell membrane. The protein localises to the mitochondrion outer membrane. It localises to the cell projection. Its subcellular location is the axon. It is found in the presynapse. G-protein coupled receptor for cannabinoids. Mediates many cannabinoid-induced effects in the central nervous system (CNS), as well as in peripheral tissues. Regulates cellular respiration and energy production in response to cannabinoids. Signaling typically involves reduction in cyclic AMP. This Xenopus laevis (African clawed frog) protein is Cannabinoid receptor 1 (cnr1).